A 622-amino-acid polypeptide reads, in one-letter code: Putative E3 ubiquitin-protein ligase ORTHRUS 4 (622 aa).

The PHD-type zinc finger occupies 12–62 (DGVCMRCQVTPPSEETLTCGTCVTPWHVSCLLPESLASSTGDWECPDCSGV). Residues 129–169 (CSICIQLPERPVTTPCGHNFCLKCFEKWAVGQGKLTCMICR) form an RING-type 1 zinc finger. Residues 258 to 407 (TRNQGVLVGE…HKMCRYLFVR (150 aa)) enclose the YDG domain. The segment at 498–555 (CQICRKVLSLPVTTPCAHNFCKACLEAKFAGITQLRDRSNGVRKLRAKKNIMTCPCCT) adopts an RING-type 2 zinc-finger fold. Residues 566 to 602 (QVNREMMEIIENFKKSEEEAEVAESSNISEEEEEESE) are a coiled coil. The tract at residues 579-622 (KKSEEEAEVAESSNISEEEEEESEPPTKKIKMDNNSVGDTSLSA) is disordered. Residues 611-622 (DNNSVGDTSLSA) show a composition bias toward polar residues.

Its subcellular location is the nucleus. The enzyme catalyses S-ubiquitinyl-[E2 ubiquitin-conjugating enzyme]-L-cysteine + [acceptor protein]-L-lysine = [E2 ubiquitin-conjugating enzyme]-L-cysteine + N(6)-ubiquitinyl-[acceptor protein]-L-lysine.. The protein operates within protein modification; protein ubiquitination. E3 ubiquitin-protein ligase. May participate in CpG methylation-dependent transcriptional regulation. The chain is Putative E3 ubiquitin-protein ligase ORTHRUS 4 (ORTH4) from Arabidopsis thaliana (Mouse-ear cress).